The sequence spans 304 residues: ATP synthase gamma chain (304 aa).

Belongs to the ATPase gamma chain family. F-type ATPases have 2 components, CF(1) - the catalytic core - and CF(0) - the membrane proton channel. CF(1) has five subunits: alpha(3), beta(3), gamma(1), delta(1), epsilon(1). CF(0) has three main subunits: a, b and c.

Its subcellular location is the cell membrane. Produces ATP from ADP in the presence of a proton gradient across the membrane. The gamma chain is believed to be important in regulating ATPase activity and the flow of protons through the CF(0) complex. The polypeptide is ATP synthase gamma chain (Mycolicibacterium paratuberculosis (strain ATCC BAA-968 / K-10) (Mycobacterium paratuberculosis)).